Consider the following 412-residue polypeptide: Subtilisin-like protease 6 (412 aa).

The first 20 residues, Met-1 to Gly-20, serve as a signal peptide directing secretion. Positions Ala-21–Asn-126 are excised as a propeptide. One can recognise an Inhibitor I9 domain in the interval Lys-36 to Thr-120. 2 N-linked (GlcNAc...) asparagine glycosylation sites follow: Asn-123 and Asn-126. In terms of domain architecture, Peptidase S8 spans Ser-135–Lys-412. Active-site charge relay system residues include Asp-167 and His-198. 2 N-linked (GlcNAc...) asparagine glycosylation sites follow: Asn-252 and Asn-264. Residue Ser-358 is the Charge relay system of the active site. A glycan (N-linked (GlcNAc...) asparagine) is linked at Asn-408.

It belongs to the peptidase S8 family.

It localises to the secreted. Its function is as follows. Secreted subtilisin-like serine protease with keratinolytic activity that contributes to pathogenicity. This Trichophyton equinum (Horse ringworm fungus) protein is Subtilisin-like protease 6 (SUB6).